The chain runs to 308 residues: Urease subunit beta (308 aa).

In terms of domain architecture, Urease spans 131-308 (GGIDTHIHFI…STNPTIPFTK (178 aa)). Ni(2+)-binding residues include His-136, His-138, Lys-219, His-248, and His-274. At Lys-219 the chain carries N6-carboxylysine.

The protein belongs to the metallo-dependent hydrolases superfamily. Urease alpha subunit family. In terms of assembly, heterohexamer of 3 UreA (alpha) and 3 UreB (beta) subunits. It depends on Ni cation as a cofactor. Carboxylation allows a single lysine to coordinate two nickel ions.

Its subcellular location is the cytoplasm. It carries out the reaction urea + 2 H2O + H(+) = hydrogencarbonate + 2 NH4(+). The protein operates within nitrogen metabolism; urea degradation; CO(2) and NH(3) from urea (urease route): step 1/1. In Helicobacter mustelae, this protein is Urease subunit beta (ureB).